The following is a 119-amino-acid chain: uncharacterized protein (119 aa).

Positions 1 to 23 (MVKWAVSILVNALLLIVIDGYID) are cleaved as a signal peptide. 3 consecutive transmembrane segments (helical) span residues 27 to 47 (ISSIGAAIIASLILSILNVLI), 50 to 70 (LLIIFTLPVTMVTLGLFLFVI), and 88 to 108 (IDGFGTAIWASVILSVFHLLI).

It is found in the cell membrane. This is an uncharacterized protein from Bacillus subtilis (strain 168).